The sequence spans 249 residues: Formylaminopyrimidine import ATP-binding protein ThiZ (249 aa).

Positions 6-228 (LTFEEVSFAY…RRKMETTEKM (223 aa)) constitute an ABC transporter domain. 39 to 46 (AKSGSGKS) is an ATP binding site.

It belongs to the ABC transporter superfamily. As to quaternary structure, the complex is likely composed of an ATP-binding protein (ThiZ), a transmembrane protein (ThiX) and a solute-binding protein (ThiY).

The protein resides in the cell membrane. It participates in cofactor biosynthesis; thiamine diphosphate biosynthesis. Functionally, participates in a thiamine pyrimidine salvage pathway as part of the ABC transporter complex ThiXYZ involved in the import of thiamine degradation products such as the formylaminopyrimidine N-formyl-4-amino-5-aminomethyl-2-methylpyrimidine (FAMP). Is likely responsible for energy coupling to the transport system. The sequence is that of Formylaminopyrimidine import ATP-binding protein ThiZ from Halalkalibacterium halodurans (strain ATCC BAA-125 / DSM 18197 / FERM 7344 / JCM 9153 / C-125) (Bacillus halodurans).